An 84-amino-acid polypeptide reads, in one-letter code: MPKSRIRKKADYTPPPSKQATNIKLGSRGWVAPVMLAMFLIGLAWIVVFYVTDGSLPIDALDNWNIVVGFGFIAAGFGVSTQWK.

Transmembrane regions (helical) follow at residues 31–51 and 60–80; these read VAPV…VFYV and ALDN…FGVS.

Belongs to the CrgA family.

It is found in the cell membrane. Involved in cell division. Coordinates growth and cell division. Required for the formation of the sporulation septa. This is Cell division protein CrgA from Streptomyces avermitilis (strain ATCC 31267 / DSM 46492 / JCM 5070 / NBRC 14893 / NCIMB 12804 / NRRL 8165 / MA-4680).